The primary structure comprises 433 residues: Pyrimidine-nucleoside phosphorylase (433 aa).

81–83 contacts phosphate; it reads KHS. 2 residues coordinate K(+): glycine 88 and threonine 90. Phosphate-binding positions include threonine 92, 108–110, and threonine 120; that span reads KMS. Residues arginine 168 and lysine 187 each contribute to the substrate site. Residues leucine 243, alanine 246, and glutamate 255 each coordinate K(+).

This sequence belongs to the thymidine/pyrimidine-nucleoside phosphorylase family. As to quaternary structure, homodimer. It depends on K(+) as a cofactor.

The enzyme catalyses uridine + phosphate = alpha-D-ribose 1-phosphate + uracil. The catalysed reaction is thymidine + phosphate = 2-deoxy-alpha-D-ribose 1-phosphate + thymine. It carries out the reaction 2'-deoxyuridine + phosphate = 2-deoxy-alpha-D-ribose 1-phosphate + uracil. Catalyzes phosphorolysis of the pyrimidine nucleosides uridine, thymidine and 2'-deoxyuridine with the formation of the corresponding pyrimidine base and ribose-1-phosphate. The chain is Pyrimidine-nucleoside phosphorylase (pdp) from Staphylococcus aureus (strain bovine RF122 / ET3-1).